The following is a 448-amino-acid chain: MSHRYIPLTEKDKQEMLETIGANSIEELFGDVPKEILLDRELDIPNGEDETTLLKRLSRIAKKNITKEDYTSFLGAGVYDHYTPAVVDAMISRSEFYTAYTPYQPEISQGELQAIFEFQTLICELTGMDVANSSMYDGITAFAEACILAFSQTKKNKIVVSKGLHYQALQVLHTYSKIRNDYEIVEVDLDGTVTDLEKLEDAIDDETAAVAVQYPNFYGSIEDLEKIKSLIKNKKTLFIVYTNPLSLGLLTPPGDFGADIVVGDTQPFGIPAQFGGPHCGFFATTKKLMRKVPGRLVGQTEDDHGNRGFVLTLQAREQHIRRDKATSNICSNQALNALASSIAMSALGKQGLQDIAVQNFENANYAKNQFKDAGIEVLPGTSFNEFVIKLDKPVKEVNDKLLEEGIIGGFDLSEVNEEFGQAMLIAVTELRTKDEIDTFVKKVGEING.

Belongs to the GcvP family. N-terminal subunit subfamily. The glycine cleavage system is composed of four proteins: P, T, L and H. In this organism, the P 'protein' is a heterodimer of two subunits.

The catalysed reaction is N(6)-[(R)-lipoyl]-L-lysyl-[glycine-cleavage complex H protein] + glycine + H(+) = N(6)-[(R)-S(8)-aminomethyldihydrolipoyl]-L-lysyl-[glycine-cleavage complex H protein] + CO2. Functionally, the glycine cleavage system catalyzes the degradation of glycine. The P protein binds the alpha-amino group of glycine through its pyridoxal phosphate cofactor; CO(2) is released and the remaining methylamine moiety is then transferred to the lipoamide cofactor of the H protein. The sequence is that of Probable glycine dehydrogenase (decarboxylating) subunit 1 from Staphylococcus carnosus (strain TM300).